Here is a 134-residue protein sequence, read N- to C-terminus: Translation initiation factor 2 subunit beta (134 aa).

Over residues M1 to E12 the composition is skewed to basic and acidic residues. The tract at residues M1 to R32 is disordered.

This sequence belongs to the eIF-2-beta/eIF-5 family. Heterotrimer composed of an alpha, a beta and a gamma chain.

Functionally, eIF-2 functions in the early steps of protein synthesis by forming a ternary complex with GTP and initiator tRNA. This is Translation initiation factor 2 subunit beta from Natronomonas pharaonis (strain ATCC 35678 / DSM 2160 / CIP 103997 / JCM 8858 / NBRC 14720 / NCIMB 2260 / Gabara) (Halobacterium pharaonis).